A 448-amino-acid chain; its full sequence is MPVTEFSFKDPYTYQNGFDSYHESEAIEGALPVGHNSPQKAPYGLYAEKLSGTAFTAPRHENKQTWVYRILPAAAHENFVEEDASSYHTLSDAKKLQHIPNQLRWDPFDLDETVDWVHGLHLVAGSGDPTVKQGLGILLYAAGKDMGKEAFYSADGDFLIVAQHGVLDIQTELGRLLVRPNEICVIPRGVRYRVTLPDGPVRGYICELYQGHYQLPELGPIGSNGLANARDFQAPVAAFDDEEGPTEYRLYSKFNNHLFSARQDHTPFDIVAWHGNYYPYKYDLGRFNTMGSVSFDHPDPSIYTVLTGPSDHVGTAIADFVIFPPRWLVAEKTFRPPWYHRNTMSEFMGLITGNYDAKTGGGFQPAGASLHNIMSAHGPDMHAFEGASNADLKPTKIGDGSMAFMFESSLMVGVSEWGLKTCQKVQEEYNEHSWQPLKRHFKDPRKAQ.

Fe cation contacts are provided by H340, E346, and H377.

This sequence belongs to the homogentisate dioxygenase family. Fe cation serves as cofactor.

It carries out the reaction homogentisate + O2 = 4-maleylacetoacetate + H(+). It participates in amino-acid degradation; L-phenylalanine degradation; acetoacetate and fumarate from L-phenylalanine: step 4/6. In Emericella nidulans (strain FGSC A4 / ATCC 38163 / CBS 112.46 / NRRL 194 / M139) (Aspergillus nidulans), this protein is Homogentisate 1,2-dioxygenase (hmgA).